The sequence spans 194 residues: Fe/S biogenesis protein NfuA (194 aa).

Residues Cys-151 and Cys-154 each contribute to the [4Fe-4S] cluster site.

The protein belongs to the NfuA family. Homodimer. Requires [4Fe-4S] cluster as cofactor.

In terms of biological role, involved in iron-sulfur cluster biogenesis. Binds a 4Fe-4S cluster, can transfer this cluster to apoproteins, and thereby intervenes in the maturation of Fe/S proteins. Could also act as a scaffold/chaperone for damaged Fe/S proteins. This chain is Fe/S biogenesis protein NfuA, found in Photobacterium profundum (strain SS9).